A 289-amino-acid chain; its full sequence is Leucine--tRNA ligase subunit beta (289 aa).

The 'KMSKS' region signature appears at 45-49 (KMSKS). K48 serves as a coordination point for ATP.

It belongs to the class-I aminoacyl-tRNA synthetase family. As to quaternary structure, seems to consist of an alpha chain and a beta chain.

The protein resides in the cytoplasm. The enzyme catalyses tRNA(Leu) + L-leucine + ATP = L-leucyl-tRNA(Leu) + AMP + diphosphate. This Aquifex aeolicus (strain VF5) protein is Leucine--tRNA ligase subunit beta (leuS').